A 137-amino-acid polypeptide reads, in one-letter code: ATP synthase epsilon chain (137 aa).

This sequence belongs to the ATPase epsilon chain family. F-type ATPases have 2 components, CF(1) - the catalytic core - and CF(0) - the membrane proton channel. CF(1) has five subunits: alpha(3), beta(3), gamma(1), delta(1), epsilon(1). CF(0) has three main subunits: a, b and c.

It localises to the cell inner membrane. Its function is as follows. Produces ATP from ADP in the presence of a proton gradient across the membrane. The protein is ATP synthase epsilon chain of Magnetococcus marinus (strain ATCC BAA-1437 / JCM 17883 / MC-1).